A 382-amino-acid polypeptide reads, in one-letter code: V-type proton ATPase subunit C 1 (382 aa).

Thr-2 carries the post-translational modification N-acetylthreonine.

The protein belongs to the V-ATPase C subunit family. In terms of assembly, V-ATPase is a heteromultimeric enzyme made up of two complexes: the ATP-hydrolytic V1 complex and the proton translocation V0 complex. The V1 complex consists of three catalytic AB heterodimers that form a heterohexamer, three peripheral stalks each consisting of EG heterodimers, one central rotor including subunits D and F, and the regulatory subunits C and H. The proton translocation complex V0 consists of the proton transport subunit a, a ring of proteolipid subunits c9c'', rotary subunit d, subunits e and f, and the accessory subunits ATP6AP1/Ac45 and ATP6AP2/PRR.

It localises to the cytoplasmic vesicle. It is found in the secretory vesicle. The protein resides in the synaptic vesicle membrane. Its subcellular location is the clathrin-coated vesicle membrane. Its function is as follows. Subunit of the V1 complex of vacuolar(H+)-ATPase (V-ATPase), a multisubunit enzyme composed of a peripheral complex (V1) that hydrolyzes ATP and a membrane integral complex (V0) that translocates protons. V-ATPase is responsible for acidifying and maintaining the pH of intracellular compartments and in some cell types, is targeted to the plasma membrane, where it is responsible for acidifying the extracellular environment. Subunit C is necessary for the assembly of the catalytic sector of the enzyme and is likely to have a specific function in its catalytic activity. The protein is V-type proton ATPase subunit C 1 (ATP6V1C1) of Macaca fascicularis (Crab-eating macaque).